We begin with the raw amino-acid sequence, 124 residues long: uncharacterized protein (124 aa).

Positions 62–72 are enriched in basic residues; sequence KKNKKQTFLKH. A disordered region spans residues 62–86; it reads KKNKKQTFLKHHQSDDHSENKVYKS. The segment covering 73-83 has biased composition (basic and acidic residues); that stretch reads HQSDDHSENKV. Residues 80–112 are a coiled coil; the sequence is ENKVYKSKKLEKKIQQLNKKKQLIDTKINFLKE.

This is an uncharacterized protein from Dictyostelium discoideum (Social amoeba).